Consider the following 276-residue polypeptide: Ribosomal RNA small subunit methyltransferase A (276 aa).

6 residues coordinate S-adenosyl-L-methionine: Asn27, Leu29, Gly54, Glu75, Asp101, and Asn123.

The protein belongs to the class I-like SAM-binding methyltransferase superfamily. rRNA adenine N(6)-methyltransferase family. RsmA subfamily.

The protein resides in the cytoplasm. The enzyme catalyses adenosine(1518)/adenosine(1519) in 16S rRNA + 4 S-adenosyl-L-methionine = N(6)-dimethyladenosine(1518)/N(6)-dimethyladenosine(1519) in 16S rRNA + 4 S-adenosyl-L-homocysteine + 4 H(+). Functionally, specifically dimethylates two adjacent adenosines (A1518 and A1519) in the loop of a conserved hairpin near the 3'-end of 16S rRNA in the 30S particle. May play a critical role in biogenesis of 30S subunits. This is Ribosomal RNA small subunit methyltransferase A from Bartonella bacilliformis (strain ATCC 35685 / KC583 / Herrer 020/F12,63).